A 619-amino-acid polypeptide reads, in one-letter code: Keratin, type II cytoskeletal 1 (619 aa).

Positions 1–180 (MSRHFSSRSG…DPEIQKVKTR (180 aa)) are head. An Omega-N-methylarginine modification is found at arginine 12. Residues serine 18 and serine 21 each carry the phosphoserine modification. Residues 28-49 (QRRTTSSSVRHSGGGGGRFSGG) are disordered. Gly residues predominate over residues 39–49 (SGGGGGRFSGG). Residue arginine 45 is modified to Omega-N-methylarginine. Serine 68 is subject to Phosphoserine. Positions 173–477 (EIQKVKTRER…ELMNTKLALD (305 aa)) form a coiled coil. The coil 1A stretch occupies residues 181 to 216 (EREQIKSLNNQFASFIDKVRFLEQQNQVLQTKWELL). Residues 181–494 (EREQIKSLNN…TLLEGEESRM (314 aa)) enclose the IF rod domain. The linker 1 stretch occupies residues 217–235 (QQVDTSTRTHSLEPYFENY). The interval 236–327 (ISNLRRRVDQ…TLYQAELSQM (92 aa)) is coil 1B. The residue at position 277 (lysine 277) is an N6,N6-dimethyllysine. The interval 328 to 351 (QTQISETNVILSMDNNRSLDLDSI) is linker 12. At serine 345 the chain carries Phosphoserine. Positions 352–490 (ISEVKAQYEE…ATYRTLLEGE (139 aa)) are coil 2. Positions 491-619 (ESRMSGECAP…VSTSYSRAVR (129 aa)) are tail. Arginine 519 and arginine 575 each carry omega-N-methylarginine. Residues 559-619 (GGGGGGYGSS…VSTSYSRAVR (61 aa)) form a disordered region. The segment covering 573–595 (GHRGGSGGGSRSGGSSGGRGSSS) has biased composition (gly residues). Residues 596 to 606 (GGIKTSSGSSS) show a composition bias toward low complexity. Polar residues predominate over residues 607–619 (VKFVSTSYSRAVR).

Belongs to the intermediate filament family. As to quaternary structure, heterotetramer of two type I and two type II keratins. Heterodimer with KRT10. Two heterodimers of KRT1 and KRT10 form a heterotetramer. Forms a heterodimer with KRT14; the interaction is more abundant in the absence of KRT5. Interacts with ITGB1 in the presence of RACK1 and SRC, and with RACK1. Interacts with C1QBP; the association represents a cell surface kininogen receptor. Interacts with EPPK1; interaction is dependent of higher-order structure of intermediate filament. In terms of processing, undergoes deimination of some arginine residues (citrullination).

The protein localises to the cell membrane. The protein resides in the cytoplasm. Its function is as follows. May regulate the activity of kinases such as PKC and SRC via binding to integrin beta-1 (ITB1) and the receptor of activated protein C kinase 1 (RACK1). In complex with C1QBP is a high affinity receptor for kininogen-1/HMWK. This Canis lupus familiaris (Dog) protein is Keratin, type II cytoskeletal 1.